Reading from the N-terminus, the 459-residue chain is ATP-dependent protease ATPase subunit HslU (459 aa).

ATP is bound by residues V18, 60–65, D272, E337, and R409; that span reads GVGKTE.

Belongs to the ClpX chaperone family. HslU subfamily. In terms of assembly, a double ring-shaped homohexamer of HslV is capped on each side by a ring-shaped HslU homohexamer. The assembly of the HslU/HslV complex is dependent on binding of ATP.

The protein localises to the cytoplasm. Functionally, ATPase subunit of a proteasome-like degradation complex; this subunit has chaperone activity. The binding of ATP and its subsequent hydrolysis by HslU are essential for unfolding of protein substrates subsequently hydrolyzed by HslV. HslU recognizes the N-terminal part of its protein substrates and unfolds these before they are guided to HslV for hydrolysis. The polypeptide is ATP-dependent protease ATPase subunit HslU (Thermoanaerobacter sp. (strain X514)).